The chain runs to 170 residues: MKLSFSLCIFFLISADIVQGTCKKVAQRSPNVNYDFCVKSLGADPKSHSADLQGLGVISANLAIQQGSKIQTFIGRILKSKVDPALKKYLNDCVGLYADAKSSVQEAIADFKSKDYASANVKMSAALDDSVTCEDGFKEKKGIASPVTKENKDYVQLTAISLAITKLLGA.

Positions 1–14 (MKLSFSLCIFFLIS) are cleaved as a signal peptide. 2 disulfide bridges follow: Cys-22–Cys-37 and Cys-93–Cys-133.

The protein belongs to the PMEI family. Expressed in pollen (at protein level). Expressed in pollen.

This is Putative invertase inhibitor from Platanus orientalis (Oriental plane-tree).